The primary structure comprises 770 residues: Protein PAT1 homolog 1 (770 aa).

A disordered region spans residues 1–42 (MFRYESLEDCPLDEDEDAFQGLGEEDEEIDQFNDDTFGSGAV). A region A; interaction with DDX6/RCK region spans residues 1 to 84 (MFRYESLEDC…EMDLLGDHEE (84 aa)). The interval 1–397 (MFRYESLEDC…HRVSHQDHLR (397 aa)) is involved in nuclear foci localization. The segment covering 7–33 (LEDCPLDEDEDAFQGLGEEDEEIDQFN) has biased composition (acidic residues). The region N; interaction with decapping machinery stretch occupies residues 85-388 (NLAERLSKMV…LNGTGDRGGH (304 aa)). The Nuclear export signal signature appears at 86-95 (LAERLSKMVI). Ser177 bears the Phosphoserine mark. Thr178 is modified (phosphothreonine). Residues Ser179 and Ser184 each carry the phosphoserine modification. Thr194 is subject to Phosphothreonine. Residues Arg217, Arg223, and Arg263 each carry the asymmetric dimethylarginine modification. Residues 223-397 (RYPAPYGERM…HRVSHQDHLR (175 aa)) are involved in RNA-binding. Ser278 bears the Phosphoserine mark. At Arg284 the chain carries Asymmetric dimethylarginine. Disordered regions lie at residues 320 to 341 (SAPP…PHLQ) and 369 to 394 (QLQS…SHQD). The span at 321–337 (APPPATPPPQQHPPGPG) shows a compositional bias: pro residues. The segment covering 369 to 380 (QLQSRNQHRNLN) has biased composition (low complexity). At Arg385 the chain carries Omega-N-methylarginine. Basic and acidic residues predominate over residues 385 to 394 (RGGHRVSHQD). The tract at residues 389–448 (RVSHQDHLRKDPYANLMLQREKDWVSKIQMMQLQSTDPYLDDFYYQNYFEKLEKSSAAEE) is region H. The interval 398–770 (KDPYANLMLQ…TKLQLVQGMR (373 aa)) is involved in nuclear speckle localization. The region C stretch occupies residues 449 to 770 (MQGDGPKKER…TKLQLVQGMR (322 aa)).

Belongs to the PAT1 family. In terms of assembly, interacts (via region A) with DDX6/RCK. Interacts (via region H and region C) with LSM1 and LSM4. Interacts (via region N) with DCP1A, DCP2, EDC3, EDC4 and XRN1. Interacts with the CCR4-NOT complex. Interacts with the Lsm-containing SMN-Sm protein complex. Interacts with EIF4ENIF1/4E-T.

The protein localises to the cytoplasm. The protein resides in the P-body. It localises to the nucleus. Its subcellular location is the PML body. It is found in the nucleus speckle. In terms of biological role, RNA-binding protein involved in deadenylation-dependent decapping of mRNAs, leading to the degradation of mRNAs. Acts as a scaffold protein that connects deadenylation and decapping machinery. Required for cytoplasmic mRNA processing body (P-body) assembly. The sequence is that of Protein PAT1 homolog 1 (Patl1) from Rattus norvegicus (Rat).